We begin with the raw amino-acid sequence, 472 residues long: E3 ubiquitin-protein ligase MYLIP-A (472 aa).

The FERM domain maps to 1 to 279 (MLCHVTRPDA…ETHAFYRCDT (279 aa)). The RING-type zinc finger occupies 384-419 (CMLCCEEEIDAAFCPCGHMVCCQNCAAQLQSCPVCR).

Interacts with anxa5. As to expression, ubiquitous.

The protein localises to the cytoplasm. It localises to the cytosol. The catalysed reaction is S-ubiquitinyl-[E2 ubiquitin-conjugating enzyme]-L-cysteine + [acceptor protein]-L-lysine = [E2 ubiquitin-conjugating enzyme]-L-cysteine + N(6)-ubiquitinyl-[acceptor protein]-L-lysine.. It participates in protein modification; protein ubiquitination. In terms of biological role, E3 ubiquitin-protein ligase that mediates ubiquitination and subsequent proteasomal degradation of myosin regulatory light chain (MRLC). Regulates cell movements during gastrulation by acting downstream of fz7 to antagonize the frizzled-signaling pathway. The sequence is that of E3 ubiquitin-protein ligase MYLIP-A (mylipa) from Danio rerio (Zebrafish).